The sequence spans 660 residues: DNA ligase (660 aa).

NAD(+) is bound by residues 33 to 37 (DFVYD), 82 to 83 (SL), and glutamate 110. The active-site N6-AMP-lysine intermediate is lysine 112. Residues arginine 133, glutamate 167, lysine 281, and lysine 305 each contribute to the NAD(+) site. Residues cysteine 396, cysteine 399, cysteine 412, and cysteine 417 each contribute to the Zn(2+) site. A BRCT domain is found at 583 to 660 (GENKLLAGKK…SFEDIKSYLD (78 aa)).

Belongs to the NAD-dependent DNA ligase family. LigA subfamily. Requires Mg(2+) as cofactor. Mn(2+) is required as a cofactor.

The catalysed reaction is NAD(+) + (deoxyribonucleotide)n-3'-hydroxyl + 5'-phospho-(deoxyribonucleotide)m = (deoxyribonucleotide)n+m + AMP + beta-nicotinamide D-nucleotide.. Functionally, DNA ligase that catalyzes the formation of phosphodiester linkages between 5'-phosphoryl and 3'-hydroxyl groups in double-stranded DNA using NAD as a coenzyme and as the energy source for the reaction. It is essential for DNA replication and repair of damaged DNA. The polypeptide is DNA ligase (Borreliella burgdorferi (strain ATCC 35210 / DSM 4680 / CIP 102532 / B31) (Borrelia burgdorferi)).